Here is a 482-residue protein sequence, read N- to C-terminus: Putative alpha-L-fucosidase (482 aa).

An N-terminal signal peptide occupies residues 1–16; it reads MIFLIFSILFLHLANC. Asparagine 182, asparagine 343, asparagine 359, and asparagine 419 each carry an N-linked (GlcNAc...) asparagine glycan.

The protein belongs to the glycosyl hydrolase 29 family.

The enzyme catalyses an alpha-L-fucoside + H2O = L-fucose + an alcohol. Its function is as follows. Alpha-L-fucosidase is responsible for hydrolyzing the alpha-1,6-linked fucose joined to the reducing-end N-acetylglucosamine of the carbohydrate moieties of glycoproteins. The protein is Putative alpha-L-fucosidase of Caenorhabditis elegans.